Consider the following 221-residue polypeptide: Deoxyribose-phosphate aldolase (221 aa).

Catalysis depends on Asp-89, which acts as the Proton donor/acceptor. The active-site Schiff-base intermediate with acetaldehyde is the Lys-151. Lys-180 acts as the Proton donor/acceptor in catalysis.

Belongs to the DeoC/FbaB aldolase family. DeoC type 1 subfamily.

The protein resides in the cytoplasm. The catalysed reaction is 2-deoxy-D-ribose 5-phosphate = D-glyceraldehyde 3-phosphate + acetaldehyde. Its pathway is carbohydrate degradation; 2-deoxy-D-ribose 1-phosphate degradation; D-glyceraldehyde 3-phosphate and acetaldehyde from 2-deoxy-alpha-D-ribose 1-phosphate: step 2/2. Functionally, catalyzes a reversible aldol reaction between acetaldehyde and D-glyceraldehyde 3-phosphate to generate 2-deoxy-D-ribose 5-phosphate. In Mesomycoplasma hyopneumoniae (strain J / ATCC 25934 / NCTC 10110) (Mycoplasma hyopneumoniae), this protein is Deoxyribose-phosphate aldolase.